The primary structure comprises 68 residues: DNA gyrase inhibitor YacG (68 aa).

Residues Cys-10, Cys-13, Cys-29, and Cys-33 each coordinate Zn(2+). Residues 45–68 (EKRIPSDTELSDSDEWSEEDPLKH) form a disordered region. The span at 53–68 (ELSDSDEWSEEDPLKH) shows a compositional bias: acidic residues.

It belongs to the DNA gyrase inhibitor YacG family. As to quaternary structure, interacts with GyrB. Zn(2+) serves as cofactor.

In terms of biological role, inhibits all the catalytic activities of DNA gyrase by preventing its interaction with DNA. Acts by binding directly to the C-terminal domain of GyrB, which probably disrupts DNA binding by the gyrase. The protein is DNA gyrase inhibitor YacG of Yersinia pseudotuberculosis serotype O:1b (strain IP 31758).